The primary structure comprises 249 residues: Phosphomannomutase 1 (249 aa).

Aspartate 12 (nucleophile) is an active-site residue. Mg(2+) contacts are provided by aspartate 12 and aspartate 14. The active-site Proton donor/acceptor is aspartate 14. Alpha-D-mannose 1-phosphate-binding residues include arginine 21, arginine 123, arginine 134, arginine 141, serine 179, and aspartate 181. Positions 209, 223, and 227 each coordinate Mg(2+).

Belongs to the eukaryotic PMM family. Homodimer.

The protein resides in the cytoplasm. The catalysed reaction is alpha-D-mannose 1-phosphate = D-mannose 6-phosphate. Its pathway is nucleotide-sugar biosynthesis; GDP-alpha-D-mannose biosynthesis; alpha-D-mannose 1-phosphate from D-fructose 6-phosphate: step 2/2. Functionally, involved in the synthesis of the GDP-mannose and dolichol-phosphate-mannose required for a number of critical mannosyl transfer reactions. In Dictyostelium discoideum (Social amoeba), this protein is Phosphomannomutase 1 (pmmA).